A 1072-amino-acid chain; its full sequence is PWWP domain-containing protein 1 (1072 aa).

A disordered region spans residues 21–133 (DSIQDPKVTP…ADEKELDLGL (113 aa)). A compositionally biased stretch (low complexity) spans 25-38 (DPKVTPDDTVVDSS). Residues 66–77 (RVLESERSEKDG) show a composition bias toward basic and acidic residues. The segment covering 96 to 128 (KDDESSEVKEEEEEEDGSDDQSSELGSEADEKE) has biased composition (acidic residues). Positions 173 to 234 (VGDLVWGKVK…PAELIPFEPN (62 aa)) constitute a PWWP domain. Residues 365–387 (KSPRSSVSTLEPHNRAPPRAPLS) form a disordered region. Residues 366–375 (SPRSSVSTLE) are compositionally biased toward polar residues. Positions 402 to 409 (SKKPTKVK) match the Nuclear localization signal 1 motif. Disordered stretches follow at residues 486–619 (AIPG…GEAG), 681–738 (LSVS…KTNQ), 871–931 (KAEP…NGNR), and 944–973 (ENSS…SSSV). Residues 498 to 526 (SLDEEKGLAEKSKERMEERAAVLPEHGKS) show a composition bias toward basic and acidic residues. Polar residues predominate over residues 545 to 568 (AGSSLQPLLESHTSASEGKSSTGS). Short sequence motifs (nuclear localization signal) lie at residues 596 to 603 (KKKKKEPD), 705 to 712 (VKRTEDPS), and 733 to 740 (LKKTNQLK). The segment covering 706-729 (KRTEDPSKAGKKRLSSDRQDEIPS) has biased composition (basic and acidic residues). Residues 871 to 880 (KAEPREPENT) are compositionally biased toward basic and acidic residues. Pro residues predominate over residues 897–906 (LHQPTLPPPN). Residues 921-930 (SSSSNNGNGN) show a composition bias toward low complexity. The segment covering 947-966 (SKANTEPPQVTMTLNRNSGP) has biased composition (polar residues).

The protein belongs to the PDP family. In terms of assembly, interacts with MSI4/FVE. Component of the PRC2 (polycomb repressive complex 2) complex which regulates histone methylation on histone H3K27.

It localises to the nucleus. Functionally, together with PDP2, PDP3 and PDP6, interacts with MSI4/FVE and MSI5 to suppress FLC, MAF4 and MAF5 expression by regulating the function of the PRC2 complex and modulating H3K27me3 level, thereby promoting flowering. This Arabidopsis thaliana (Mouse-ear cress) protein is PWWP domain-containing protein 1.